We begin with the raw amino-acid sequence, 67 residues long: VRDGYIVKPTNCVIHCIPFSPGCDKDCKEKGAASGYCQAFGKHGNGCWCIDLPDKVPIKDPNQDCTR.

Residues arginine 2–threonine 66 enclose the LCN-type CS-alpha/beta domain. 4 disulfide bridges follow: cysteine 12–cysteine 65, cysteine 16–cysteine 37, cysteine 23–cysteine 47, and cysteine 27–cysteine 49. Position 67 (arginine 67) is a propeptide, removed by a carboxypeptidase.

This sequence belongs to the long (4 C-C) scorpion toxin superfamily. Sodium channel inhibitor family. Alpha subfamily. In terms of tissue distribution, expressed by the venom gland.

The protein localises to the secreted. Its function is as follows. Alpha toxins bind voltage-independently at site-3 of sodium channels (Nav) and inhibit the inactivation of the activated channels, thereby blocking neuronal transmission. In Androctonus crassicauda (Arabian fat-tailed scorpion), this protein is Putative sodium channel alpha-toxin Acra7.